Reading from the N-terminus, the 364-residue chain is ERCC4 domain-containing protein EP364R (364 aa).

The ERCC4 domain maps to 3–102 (FLVADHREHH…QLYFFVEGPA (100 aa)). The segment covering 319 to 328 (ASRPATQPAA) has biased composition (polar residues). Residues 319 to 352 (ASRPATQPAATQPLHEVSDDATSNASDTSSPIGH) form a disordered region. Residues 338-348 (DATSNASDTSS) show a composition bias toward low complexity.

This sequence belongs to the asfivirus EP364R family.

Functionally, plays a role in the inhibition of type I interferon signaling pathway. Mechanistically, specifically interacts with 2',3'-cGAMP and cleaves it via its phosphodiesterase activity. In turn, prevents 2',3'-cGAMP interaction with host ER-resident STING1 leading to inhibition of downstream signaling pathway and type I interferon production. This is ERCC4 domain-containing protein EP364R from African swine fever virus (strain Badajoz 1971 Vero-adapted) (Ba71V).